The primary structure comprises 488 residues: Replication-associated protein (488 aa).

The interval 462 to 488 (PRPRQMQRSATEHNLFQYARSGRDPTS) is disordered.

It is found in the host nucleus. In terms of biological role, plays an essential for the replication of viral DNA. Presumably cleaves viral genomic dsRNA replicative form to initiate rolling circle replication. In Chaetoceros diatodnavirus 1 (Chaetoceros setoense DNA virus), this protein is Replication-associated protein.